The chain runs to 107 residues: Thioredoxin (107 aa).

One can recognise a Thioredoxin domain in the interval 2–107; that stretch reads SEVLHINDAD…QLANFINQHI (106 aa). Residues Cys-32 and Cys-35 are joined by a disulfide bond.

It belongs to the thioredoxin family.

Its function is as follows. Participates in various redox reactions through the reversible oxidation of its active center dithiol to a disulfide and catalyzes dithiol-disulfide exchange reactions. The protein is Thioredoxin (trxA) of Haemophilus influenzae (strain ATCC 51907 / DSM 11121 / KW20 / Rd).